Here is a 1035-residue protein sequence, read N- to C-terminus: GRB10-interacting GYF protein 1 (1035 aa).

A phosphoserine mark is found at Ser-24, Ser-28, Ser-137, and Ser-157. The interval Lys-105–Asp-422 is disordered. 2 stretches are compositionally biased toward basic and acidic residues: residues Ser-148–Phe-179 and Pro-186–Glu-203. Ser-230 carries the post-translational modification Phosphoserine. The span at Gly-239 to Arg-267 shows a compositional bias: basic and acidic residues. Composition is skewed to acidic residues over residues Cys-295–Gly-304 and Pro-324–Pro-349. The residue at position 341 (Ser-341) is a Phosphoserine. Positions Ser-367–Leu-378 are enriched in low complexity. The span at Thr-388–Arg-401 shows a compositional bias: basic and acidic residues. Ser-406 bears the Phosphoserine mark. The segment covering Ser-406–Gly-417 has biased composition (low complexity). One can recognise a GYF domain in the interval Ala-474–Gly-522. Phosphoserine occurs at positions 538 and 638. Disordered stretches follow at residues Pro-621 to Pro-640, Lys-696 to Glu-724, and Trp-825 to Arg-879. The span at Leu-629–Val-639 shows a compositional bias: polar residues. A compositionally biased stretch (basic and acidic residues) spans Lys-696 to Glu-722. Positions Leu-857–Ser-874 are enriched in low complexity. Ser-862 is modified (phosphoserine).

It belongs to the GIGYF family. As to quaternary structure, interacts with GRB10. This transient binding is increased under IGF1 stimulation and leads to recruitment of GIGYF1/GRB10 complex to IGF1 receptor. Interacts with DDX6.

In terms of biological role, may act cooperatively with GRB10 to regulate tyrosine kinase receptor signaling. May increase IGF1 receptor phosphorylation under IGF1 stimulation as well as phosphorylation of IRS1 and SHC1. The protein is GRB10-interacting GYF protein 1 (GIGYF1) of Homo sapiens (Human).